A 396-amino-acid chain; its full sequence is uncharacterized protein (396 aa).

The next 11 membrane-spanning stretches (helical) occupy residues 7 to 27 (SDDV…SIGL), 36 to 56 (AVSG…VGVL), 62 to 82 (VYDT…LFQI), 94 to 114 (LLFI…LAFF), 159 to 179 (VVAD…IPAL), 218 to 238 (IAFN…VSGY), 250 to 270 (GTLG…IFLF), 285 to 305 (TFLI…RLIV), 310 to 330 (LILL…LAAG), 340 to 360 (ILLA…MAIA), and 367 to 387 (VAPI…VGTF).

It is found in the cell membrane. This is an uncharacterized protein from Bacillus subtilis (strain 168).